Consider the following 144-residue polypeptide: Large ribosomal subunit protein uL11 (144 aa).

This sequence belongs to the universal ribosomal protein uL11 family. In terms of assembly, part of the ribosomal stalk of the 50S ribosomal subunit. Interacts with L10 and the large rRNA to form the base of the stalk. L10 forms an elongated spine to which L12 dimers bind in a sequential fashion forming a multimeric L10(L12)X complex. One or more lysine residues are methylated.

Forms part of the ribosomal stalk which helps the ribosome interact with GTP-bound translation factors. The protein is Large ribosomal subunit protein uL11 of Polaromonas sp. (strain JS666 / ATCC BAA-500).